A 340-amino-acid polypeptide reads, in one-letter code: L-threonine 3-dehydrogenase (340 aa).

Residue cysteine 38 participates in Zn(2+) binding. Active-site charge relay system residues include threonine 40 and histidine 43. Residues histidine 63, glutamate 64, cysteine 93, cysteine 96, cysteine 99, and cysteine 107 each contribute to the Zn(2+) site. Residues isoleucine 175, aspartate 195, arginine 200, 261–263 (LGI), and 285–286 (IY) each bind NAD(+).

The protein belongs to the zinc-containing alcohol dehydrogenase family. Homotetramer. The cofactor is Zn(2+).

It localises to the cytoplasm. The catalysed reaction is L-threonine + NAD(+) = (2S)-2-amino-3-oxobutanoate + NADH + H(+). It participates in amino-acid degradation; L-threonine degradation via oxydo-reductase pathway; glycine from L-threonine: step 1/2. Its function is as follows. Catalyzes the NAD(+)-dependent oxidation of L-threonine to 2-amino-3-ketobutyrate. The sequence is that of L-threonine 3-dehydrogenase from Xanthomonas campestris pv. campestris (strain ATCC 33913 / DSM 3586 / NCPPB 528 / LMG 568 / P 25).